The primary structure comprises 260 residues: Thrombin-like enzyme 2 (260 aa).

Positions 1-18 (MMLIRVLANLLILQLSYA) are cleaved as a signal peptide. Positions 19–24 (QKSSEL) are excised as a propeptide. The Peptidase S1 domain occupies 25–251 (VIGGDECNIN…HLDWIQSIIA (227 aa)). Cystine bridges form between Cys31/Cys165, Cys52/Cys68, Cys102/Cys258, Cys144/Cys212, Cys176/Cys191, and Cys202/Cys227. Residue His67 is the Charge relay system of the active site. N-linked (GlcNAc...) asparagine glycosylation is present at Asn105. The active-site Charge relay system is Asp112. 2 N-linked (GlcNAc...) asparagine glycosylation sites follow: Asn156 and Asn172. Ser206 serves as the catalytic Charge relay system. A glycan (N-linked (GlcNAc...) asparagine) is linked at Asn253.

This sequence belongs to the peptidase S1 family. Snake venom subfamily. In terms of assembly, monomer. Expressed by the venom gland.

The protein resides in the secreted. Its function is as follows. Thrombin-like snake venom serine protease. The chain is Thrombin-like enzyme 2 from Trimeresurus albolabris (White-lipped pit viper).